The chain runs to 455 residues: Argininosuccinate lyase (455 aa).

It belongs to the lyase 1 family. Argininosuccinate lyase subfamily.

The protein resides in the cytoplasm. The enzyme catalyses 2-(N(omega)-L-arginino)succinate = fumarate + L-arginine. The protein operates within amino-acid biosynthesis; L-arginine biosynthesis; L-arginine from L-ornithine and carbamoyl phosphate: step 3/3. The sequence is that of Argininosuccinate lyase from Shewanella sp. (strain MR-7).